We begin with the raw amino-acid sequence, 313 residues long: Hsp90 co-chaperone Cdc37-like 1 (313 aa).

Belongs to the CDC37 family. As to quaternary structure, forms complexes with Hsp70 and Hsp90.

It localises to the cytoplasm. In terms of biological role, co-chaperone that binds to numerous proteins and promotes their interaction with Hsp70 and Hsp90. The polypeptide is Hsp90 co-chaperone Cdc37-like 1 (cdc37l1) (Danio rerio (Zebrafish)).